The sequence spans 393 residues: Ribonuclease D (393 aa).

Residues 14 to 181 form the 3'-5' exonuclease domain; it reads LITTTEDLTG…VYQLLLERLE (168 aa). Residues 219–300 form the HRDC domain; the sequence is NRRMLGVLRA…AAARALPDGA (82 aa).

It belongs to the RNase D family. A divalent metal cation serves as cofactor.

The protein localises to the cytoplasm. It catalyses the reaction Exonucleolytic cleavage that removes extra residues from the 3'-terminus of tRNA to produce 5'-mononucleotides.. In terms of biological role, exonuclease involved in the 3' processing of various precursor tRNAs. Initiates hydrolysis at the 3'-terminus of an RNA molecule and releases 5'-mononucleotides. The polypeptide is Ribonuclease D (Gluconacetobacter diazotrophicus (strain ATCC 49037 / DSM 5601 / CCUG 37298 / CIP 103539 / LMG 7603 / PAl5)).